We begin with the raw amino-acid sequence, 527 residues long: MLNVPSQAFPAAGSQQRVAPAGQSRNKVVLKPGHSLLDWIRLTKSGQDLTGLRGRLIEVTEDELKKHNTKKDCWTCIRGMVYNLSAYMDFHPGGEEELMRAAGIDSTDLFDEVHRWVNYESMLKECLVGRMAVKPSPALQAHTEKTESTHLNGLSAPPSLRPEPLSAPLPAKDHRPRYDWFQTDGTVNIVVYTKRKIPSAGCAVVDLQDDNLRVEMLLGRMSYLLYWRLSSRVQDHVDVQTAHSVGKVQLCLRKSVKEKWTQLGQSLEHHDTFIQCKDRGLFYRECVLLSKTDVTHNTQLLRLQLPRGSRMQVPVGRHVYLKTSVQGTDVVKPYTAVDQMLIPPSQSSAEVGSDIHLMIKVYPDGVLTPHIANLPIGASLSVGGPEGSFTLRVLRDVTHLYMLAAGTGFTPMARLIRLALQDFTVIRKMKLMFFNRQERDILWQSQLDELCTKEERFEVQHVLSEPADSWTGRRGRIDACMLQNFLERPENSKCLVCVCGPAGFTESAVQLVRQLDFSEEELHVFQA.

The segment at methionine 1–serine 24 is disordered. Residues leucine 56–alanine 132 form the Cytochrome b5 heme-binding domain. Residues histidine 91 and histidine 114 each contribute to the heme site. The disordered stretch occupies residues alanine 138 to alanine 171. The region spanning aspartate 173–glycine 264 is the CS domain. The 112-residue stretch at leucine 281–arginine 392 folds into the FAD-binding FR-type domain. Residues alanine 372–glycine 387 and histidine 399–leucine 431 contribute to the FAD site.

Belongs to the flavoprotein pyridine nucleotide cytochrome reductase family. FAD serves as cofactor.

The protein resides in the endoplasmic reticulum. It carries out the reaction 2 Fe(III)-[cytochrome b5] + NADH = 2 Fe(II)-[cytochrome b5] + NAD(+) + H(+). In terms of biological role, NADH-cytochrome b5 reductase involved in endoplasmic reticulum stress response pathway. The sequence is that of Cytochrome b5 reductase 4 (cyb5r4) from Danio rerio (Zebrafish).